The primary structure comprises 202 residues: Cutinase (202 aa).

The N-terminal stretch at Met1–Ala20 is a signal peptide. Cys31 and Cys106 form a disulfide bridge. Ser117 functions as the Nucleophile in the catalytic mechanism. Cys165 and Cys172 are disulfide-bonded. Asp169 is a catalytic residue. His182 (proton donor/acceptor) is an active-site residue.

This sequence belongs to the cutinase family. In terms of processing, the 2 disulfide bonds play a critical role in holding the catalytic residues in juxta-position; reduction of the disulfide bridges results in the complete inactivation of the enzyme.

It is found in the secreted. It catalyses the reaction cutin + H2O = cutin monomers.. Its function is as follows. Catalyzes the hydrolysis of complex carboxylic polyesters found in the cell wall of plants. Degrades cutin, a macromolecule that forms the structure of the plant cuticle. Allows pathogenic fungi to penetrate through the cuticular barrier into the host plant during the initial stage of fungal infection. The protein is Cutinase of Botryotinia fuckeliana (Noble rot fungus).